A 184-amino-acid chain; its full sequence is Large ribosomal subunit protein uL6 (184 aa).

Belongs to the universal ribosomal protein uL6 family. Part of the 50S ribosomal subunit.

This protein binds to the 23S rRNA, and is important in its secondary structure. It is located near the subunit interface in the base of the L7/L12 stalk, and near the tRNA binding site of the peptidyltransferase center. The protein is Large ribosomal subunit protein uL6 of Desulfitobacterium hafniense (strain Y51).